We begin with the raw amino-acid sequence, 273 residues long: WIMGHMVNAIGQIDEFVNLGANSIETDVSFDDSANPQYTYHGVPCDCGRSCLKWENYNDFLKGLRSATTPGNSKYQSKLVLVVFDLKTGSLYDNQANEAGKKLAKNLLQHYWNNGNNGGRAYIVLSIPDLNHYPLIKGFTDTLTQEGHPELLDKVGFDFSGNDAIGDVANAYKKAGVTGHVWQSDGITNCLLRGLTRVREAVANRDSGKGYINKVYYWTVDKRASTRDALDAGVDGVMTNYPDVITDVMNEAAYKNKFRLATYEDNPWETFKK.

Histidine 5 is an active-site residue. The Mg(2+) site is built by glutamate 25 and aspartate 27. Histidine 41 functions as the Nucleophile in the catalytic mechanism. 2 cysteine pairs are disulfide-bonded: cysteine 45/cysteine 51 and cysteine 47/cysteine 190. Aspartate 85 is a Mg(2+) binding site.

Belongs to the arthropod phospholipase D family. Class II subfamily. The cofactor is Mg(2+). In terms of tissue distribution, expressed by the venom gland.

The protein localises to the secreted. The enzyme catalyses an N-(acyl)-sphingosylphosphocholine = an N-(acyl)-sphingosyl-1,3-cyclic phosphate + choline. It catalyses the reaction an N-(acyl)-sphingosylphosphoethanolamine = an N-(acyl)-sphingosyl-1,3-cyclic phosphate + ethanolamine. The catalysed reaction is a 1-acyl-sn-glycero-3-phosphocholine = a 1-acyl-sn-glycero-2,3-cyclic phosphate + choline. It carries out the reaction a 1-acyl-sn-glycero-3-phosphoethanolamine = a 1-acyl-sn-glycero-2,3-cyclic phosphate + ethanolamine. Its function is as follows. Dermonecrotic toxins cleave the phosphodiester linkage between the phosphate and headgroup of certain phospholipids (sphingolipid and lysolipid substrates), forming an alcohol (often choline) and a cyclic phosphate. This toxin acts on sphingomyelin (SM). It may also act on ceramide phosphoethanolamine (CPE), lysophosphatidylcholine (LPC) and lysophosphatidylethanolamine (LPE), but not on lysophosphatidylserine (LPS), and lysophosphatidylglycerol (LPG). It acts by transphosphatidylation, releasing exclusively cyclic phosphate products as second products. Induces dermonecrosis, hemolysis, increased vascular permeability, edema, inflammatory response, and platelet aggregation. The polypeptide is Dermonecrotic toxin LspaSicTox-alphaIA2iii (Loxosceles spadicea (Recluse spider)).